A 2543-amino-acid polypeptide reads, in one-letter code: Highly reducing polyketide synthase GPY1 (2543 aa).

Residues Arg9–Phe435 enclose the Ketosynthase family 3 (KS3) domain. Active-site for beta-ketoacyl synthase activity residues include Cys182, His318, and His358. Residues Thr574–Ala881 are malonyl-CoA:ACP transacylase (MAT) domain. The interval His953 to Lys1089 is N-terminal hotdog fold. Residues His953–Asp1253 are dehydratase (DH) domain. One can recognise a PKS/mFAS DH domain in the interval His953–Thr1256. His985 functions as the Proton acceptor; for dehydratase activity in the catalytic mechanism. Residues Met1103 to Thr1256 form a C-terminal hotdog fold region. Asp1169 functions as the Proton donor; for dehydratase activity in the catalytic mechanism. Residues Asn1399–Ala1587 are methyltransferase (CMet) domain. Residues Gly1830–Val2136 are enoyl reductase (ER) domain. A ketoreductase (KR) domain region spans residues Thr2161 to Glu2335. The region spanning Ala2464–Ile2541 is the Carrier domain. Ser2501 carries the post-translational modification O-(pantetheine 4'-phosphoryl)serine.

Highly reducing polyketide synthase; part of the gene cluster that mediates the biosynthesis of gibepyrone A, a 2H-pyran-2-one metabolite exhibiting a moderate antimicrobial activity against Gram-positive bacteria and yeasts. The highly reducing polyketide synthase GPY1 is sufficient to produce gibepyrone A. GPY1 uses an acetyl-CoA starter unit, three malonyl-CoA extender units, and two SAM-dependent methylations to establish the gibepyrone A carbon backbone, followed by product release upon intramolecular cyclization. The gibepyrone A derivatives gibepyrones B and D are produced by cluster-independent P450 monooxygenases, probably to protect the fungus from the toxic product. In contrast, the formation of gibepyrones E and F from gibepyrone A is a spontaneous process and independent of enzymatic activity. The chain is Highly reducing polyketide synthase GPY1 from Gibberella fujikuroi (strain CBS 195.34 / IMI 58289 / NRRL A-6831) (Bakanae and foot rot disease fungus).